Reading from the N-terminus, the 361-residue chain is D-alanine--D-alanine ligase (361 aa).

The ATP-grasp domain maps to 139–336; sequence KLLLKEKEIS…FSQIIDNMIN (198 aa). ATP is bound at residue 167–222; that stretch reads EKNLGYPMIVKPARLGSSIGVSKVVDRKNFEEAVKNVLLFDNKVLVEKWINAREIN. Mg(2+) contacts are provided by Asp296, Glu307, and Asn309.

The protein belongs to the D-alanine--D-alanine ligase family. It depends on Mg(2+) as a cofactor. Mn(2+) is required as a cofactor.

The protein localises to the cytoplasm. It carries out the reaction 2 D-alanine + ATP = D-alanyl-D-alanine + ADP + phosphate + H(+). It participates in cell wall biogenesis; peptidoglycan biosynthesis. Its function is as follows. Cell wall formation. The sequence is that of D-alanine--D-alanine ligase from Thermosipho melanesiensis (strain DSM 12029 / CIP 104789 / BI429).